Reading from the N-terminus, the 303-residue chain is Glutamyl-Q tRNA(Asp) synthetase (303 aa).

L-glutamate is bound by residues 9 to 13 (RFAPS) and glutamate 45. The short motif at 12–22 (PSPTGAMHLGN) is the 'HIGH' region element. The Zn(2+) site is built by cysteine 100, cysteine 102, tyrosine 125, and cysteine 129. L-glutamate contacts are provided by tyrosine 184 and arginine 202. Residues 240 to 244 (RLAKR) carry the 'KMSKS' region motif. Position 243 (lysine 243) interacts with ATP.

This sequence belongs to the class-I aminoacyl-tRNA synthetase family. GluQ subfamily. Zn(2+) is required as a cofactor.

Functionally, catalyzes the tRNA-independent activation of glutamate in presence of ATP and the subsequent transfer of glutamate onto a tRNA(Asp). Glutamate is transferred on the 2-amino-5-(4,5-dihydroxy-2-cyclopenten-1-yl) moiety of the queuosine in the wobble position of the QUC anticodon. The sequence is that of Glutamyl-Q tRNA(Asp) synthetase from Deinococcus geothermalis (strain DSM 11300 / CIP 105573 / AG-3a).